The following is a 475-amino-acid chain: Ankyrin repeat, SAM and basic leucine zipper domain-containing protein 1 (475 aa).

The interval 1 to 38 is disordered; it reads MATGSLRGLAVAGGGESSDSEDDGWEIGYLDRPPQKLK. Phosphoserine is present on residues Ser-17, Ser-18, and Ser-20. ANK repeat units follow at residues 45–74, 78–107, 110–144, 148–177, 181–210, and 214–243; these read EKNE…SVDS, YGWT…NASF, DKQT…DPNV, RLMT…EVNI, NGYT…NKTL, and DGKT…PLEG. The 63-residue stretch at 272–334 folds into the SAM domain; it reads SYTAFGDLEI…KILAALKELE (63 aa).

In terms of assembly, interacts with DDX4, PIWIL1, RANBP9 and TDRD1.

The protein localises to the cytoplasm. In terms of biological role, plays a central role during spermatogenesis by repressing transposable elements and preventing their mobilization, which is essential for the germline integrity. Acts via the piRNA metabolic process, which mediates the repression of transposable elements during meiosis by forming complexes composed of piRNAs and Piwi proteins and governs the methylation and subsequent repression of transposons. Its association with pi-bodies suggests a participation in the primary piRNAs metabolic process. Required prior to the pachytene stage to facilitate the production of multiple types of piRNAs, including those associated with repeats involved in the regulation of retrotransposons. May act by mediating protein-protein interactions during germ cell maturation. This chain is Ankyrin repeat, SAM and basic leucine zipper domain-containing protein 1 (ASZ1), found in Oryctolagus cuniculus (Rabbit).